The following is a 403-amino-acid chain: MSSYLFTSESVSEGHPDKIADQISDAVLDAILAQDKRARVACETMVKTGVAIVAGEVTTSAWIDLEALTRKVILDIGYNSSDVGFDGETCGVLNLIGKQSPDINQGVDRKNPEQQGAGDQGLMFGYATNETDSYMPAAIHLSHRLVEQQAKIRKKKNSALSWLRPDAKSQVTLRYEDGVATAIDAVVLSTQHDPGVKQKDLIEAVREEILKPVLPAKWLHKGTKFHINPTGKFVIGGPVGDCGLTGRKIIVDTYGGWARHGGGAFSGKDPSKVDRSAAYAARYVAKNVVAAGLADRCEVQVSYAIGVAEPTSISVTTFGTGKIADELIEKLIRKHFDLRPFGIIQMLDLIHPMYQQTASYGHFGRKPKDFTYTDGTGAQHSATSFSWEKTDRAEALRAAAKLK.

ATP is bound at residue H15. Position 17 (D17) interacts with Mg(2+). Residue E43 participates in K(+) binding. E56 and Q99 together coordinate L-methionine. The tract at residues 99-109 (QSPDINQGVDR) is flexible loop. ATP contacts are provided by residues 166–168 (DAK), 232–233 (KF), D241, 247–248 (RK), A264, and K268. D241 serves as a coordination point for L-methionine. K272 lines the L-methionine pocket.

The protein belongs to the AdoMet synthase family. As to quaternary structure, homotetramer; dimer of dimers. It depends on Mg(2+) as a cofactor. Requires K(+) as cofactor.

It localises to the cytoplasm. It catalyses the reaction L-methionine + ATP + H2O = S-adenosyl-L-methionine + phosphate + diphosphate. Its pathway is amino-acid biosynthesis; S-adenosyl-L-methionine biosynthesis; S-adenosyl-L-methionine from L-methionine: step 1/1. In terms of biological role, catalyzes the formation of S-adenosylmethionine (AdoMet) from methionine and ATP. The overall synthetic reaction is composed of two sequential steps, AdoMet formation and the subsequent tripolyphosphate hydrolysis which occurs prior to release of AdoMet from the enzyme. The sequence is that of S-adenosylmethionine synthase from Xanthomonas campestris pv. campestris (strain 8004).